Here is a 480-residue protein sequence, read N- to C-terminus: Ammonium transporter 2 member 4 (480 aa).

Over 1-27 (MELPSNLLPDEASPEWMNKGDNAWQLT) the chain is Extracellular. Residues 28–48 (AATMVGLQSIPGLVILYGSLV) form a helical membrane-spanning segment. Residues 49–51 (KKT) lie on the Cytoplasmic side of the membrane. Residues 52–72 (WAINSAFMAFYAFASVLLCWV) traverse the membrane as a helical segment. The Extracellular segment spans residues 73–113 (SWAYQMSFGEKMVFFLGKPNVALDEKFLLGKAFLGNFPNAT). N111 is a glycosylation site (N-linked (GlcNAc...) asparagine). A helical transmembrane segment spans residues 114 to 134 (MVFYQGVFAGLTLILIAGALL). At 135 to 141 (GRMNIRA) the chain is on the cytoplasmic side. The helical transmembrane segment at 142–162 (WMLFVPLWVTFSYTVVAFSIW) threads the bilayer. Residues 163-175 (CPDGWLAKRGVID) are Extracellular-facing. A helical membrane pass occupies residues 176–196 (FAGGYVIHLSAGVAGFTAAYW). Residues 197 to 214 (VGPRADKDRETFPAATNN) lie on the Cytoplasmic side of the membrane. The chain crosses the membrane as a helical span at residues 215–235 (MIMVLAGAGLLWMGWSGFNGG). The Extracellular portion of the chain corresponds to 236-242 (APFVAST). Residues 243-263 (IASLAILNTHVCTAASITVWV) traverse the membrane as a helical segment. The Cytoplasmic segment spans residues 264 to 274 (MLDTFYFGKPT). Residues 275–295 (VFGAVQGMITGLVCITPAAGV) traverse the membrane as a helical segment. Over 296–298 (VQG) the chain is Extracellular. Residues 299–319 (WAAILMGFISGSIPWYTMMVL) traverse the membrane as a helical segment. The Cytoplasmic portion of the chain corresponds to 320-334 (HNKVNFLKKIDDPMA). The helical transmembrane segment at 335–355 (VFHTHAIAGALGGILTGFFAV) threads the bilayer. At 356 to 394 (PKLCRLFYMVPDWEKYIGLAYGLQNKGATQAGLKQMVIQ) the chain is on the extracellular side. A helical transmembrane segment spans residues 395–415 (IEAIVFVICYNVLMTSLICLI). The Cytoplasmic portion of the chain corresponds to 416 to 480 (VRVIVPLRLN…SRSLGELQMV (65 aa)).

It belongs to the ammonia transporter channel (TC 1.A.11.2) family.

The protein localises to the cell membrane. Functionally, involved in ammonium transport. May be involved in arbuscular mycorrhizal (AM) symbiosis with AM fungi. The chain is Ammonium transporter 2 member 4 from Medicago truncatula (Barrel medic).